Here is a 62-residue protein sequence, read N- to C-terminus: Conotoxin Qc5.2 (62 aa).

Residues 1-22 form the signal peptide; the sequence is MRCVPVFIILLLLSPSAPSVDA. Positions 23–48 are excised as a propeptide; it reads HPMTKDDVPQASLHDDAKRTLQVPWM. Residue valine 60 is modified to Valine amide.

Belongs to the conotoxin T superfamily. Contains 2 disulfide bonds that can be either 'C1-C3, C2-C4' or 'C1-C4, C2-C3', since these disulfide connectivities have been observed for conotoxins with cysteine framework V (for examples, see AC P0DQQ7 and AC P81755). Expressed by the venom duct.

It is found in the secreted. The protein is Conotoxin Qc5.2 of Conus quercinus (Oak cone).